Reading from the N-terminus, the 495-residue chain is Glutamyl-tRNA(Gln) amidotransferase subunit A (495 aa).

Active-site charge relay system residues include K78 and S158. S182 (acyl-ester intermediate) is an active-site residue.

Belongs to the amidase family. GatA subfamily. In terms of assembly, heterotrimer of A, B and C subunits.

It carries out the reaction L-glutamyl-tRNA(Gln) + L-glutamine + ATP + H2O = L-glutaminyl-tRNA(Gln) + L-glutamate + ADP + phosphate + H(+). Allows the formation of correctly charged Gln-tRNA(Gln) through the transamidation of misacylated Glu-tRNA(Gln) in organisms which lack glutaminyl-tRNA synthetase. The reaction takes place in the presence of glutamine and ATP through an activated gamma-phospho-Glu-tRNA(Gln). This chain is Glutamyl-tRNA(Gln) amidotransferase subunit A, found in Roseobacter denitrificans (strain ATCC 33942 / OCh 114) (Erythrobacter sp. (strain OCh 114)).